The chain runs to 235 residues: C-type lectin domain family 2 member D-related protein (235 aa).

The disordered stretch occupies residues 1–50 (MPSSAHLQDPPPHLSRTLTQDEEQTSLRQSSSCGPSTTSASASESLSGST). Residues 1–75 (MPSSAHLQDP…KIIPTESAAK (75 aa)) lie on the Cytoplasmic side of the membrane. Residues 30–50 (SSSCGPSTTSASASESLSGST) show a composition bias toward low complexity. The chain crosses the membrane as a helical; Signal-anchor for type II membrane protein span at residues 76–96 (LLCCYAVFMALTVVVIALSIA). The Extracellular segment spans residues 97–235 (LSVKKTPQIS…KLNSYTSQCP (139 aa)). The region spanning 121-232 (FGNKCYYFNE…ICSKLNSYTS (112 aa)) is the C-type lectin domain. Asparagine 134 is a glycosylation site (N-linked (GlcNAc...) asparagine).

It localises to the cell membrane. Its function is as follows. Lectin-type cell surface receptor. This Rattus norvegicus (Rat) protein is C-type lectin domain family 2 member D-related protein.